The following is a 336-amino-acid chain: Phenylalanine--tRNA ligase alpha subunit (336 aa).

A Mg(2+)-binding site is contributed by Glu-251.

This sequence belongs to the class-II aminoacyl-tRNA synthetase family. Phe-tRNA synthetase alpha subunit type 1 subfamily. In terms of assembly, tetramer of two alpha and two beta subunits. Mg(2+) serves as cofactor.

Its subcellular location is the cytoplasm. It catalyses the reaction tRNA(Phe) + L-phenylalanine + ATP = L-phenylalanyl-tRNA(Phe) + AMP + diphosphate + H(+). The chain is Phenylalanine--tRNA ligase alpha subunit from Syntrophobacter fumaroxidans (strain DSM 10017 / MPOB).